The sequence spans 644 residues: Chaperone protein HtpG (644 aa).

The a; substrate-binding stretch occupies residues Met-1–Arg-352. The tract at residues Glu-353–Arg-566 is b. Residues Leu-567–Leu-644 form a c region.

Belongs to the heat shock protein 90 family. As to quaternary structure, homodimer.

It is found in the cytoplasm. Its function is as follows. Molecular chaperone. Has ATPase activity. In Mycobacterium avium (strain 104), this protein is Chaperone protein HtpG.